Here is a 290-residue protein sequence, read N- to C-terminus: Enoyl-CoA hydratase, mitochondrial (290 aa).

The N-terminal 27 residues, 1–27 (MATLRVLLSCVRGPLRPPVRCPAWRPF), are a transit peptide targeting the mitochondrion. Threonine 46 is subject to Phosphothreonine. Residue 98-101 (ADIK) coordinates substrate. At lysine 101 the chain carries N6-acetyllysine; alternate. Lysine 101 bears the N6-succinyllysine; alternate mark. Phosphoserine is present on serine 114. Position 115 is an N6-acetyllysine; alternate (lysine 115). Lysine 115 is modified (N6-succinyllysine; alternate). An N6-acetyllysine modification is found at lysine 118. Glycine 141 contacts substrate. Lysine 204 carries the post-translational modification N6-succinyllysine. N6-acetyllysine is present on lysine 211.

It belongs to the enoyl-CoA hydratase/isomerase family. As to quaternary structure, homohexamer; dimer of trimers.

It is found in the mitochondrion matrix. The catalysed reaction is a (3S)-3-hydroxyacyl-CoA = a (2E)-enoyl-CoA + H2O. It carries out the reaction a (3E)-enoyl-CoA = a 4-saturated (2E)-enoyl-CoA. The enzyme catalyses (3E)-hexenoyl-CoA = (2E)-hexenoyl-CoA. It catalyses the reaction (3S)-3-hydroxybutanoyl-CoA = (2E)-butenoyl-CoA + H2O. The catalysed reaction is 3-hydroxyisovaleryl-CoA = 3-methylbut-2-enoyl-CoA + H2O. It carries out the reaction 3-hydroxypropanoyl-CoA = acryloyl-CoA + H2O. The enzyme catalyses 3-hydroxybutanoyl-CoA = (2E)-butenoyl-CoA + H2O. It catalyses the reaction 2-methylpropenoyl-CoA + H2O = (S)-3-hydroxyisobutanoyl-CoA. The catalysed reaction is (3S)-hydroxyhexanoyl-CoA = (2E)-hexenoyl-CoA + H2O. It carries out the reaction (3S)-hydroxydecanoyl-CoA = (2E)-decenoyl-CoA + H2O. The protein operates within lipid metabolism; fatty acid beta-oxidation. In terms of biological role, converts unsaturated trans-2-enoyl-CoA species ((2E)-enoyl-CoA) to the corresponding (3S)-3-hydroxyacyl-CoA species through addition of a water molecule to the double bond. Catalyzes the hydration of medium- and short-chained fatty enoyl-CoA thioesters from 4 carbons long (C4) up to C16. Has high substrate specificity for crotonyl-CoA ((2E)-butenoyl-CoA) and moderate specificity for acryloyl-CoA, 3-methylcrotonyl-CoA (3-methyl-(2E)-butenoyl-CoA) and methacrylyl-CoA ((2E)-2-methylpropenoyl-CoA). Can bind tiglyl-CoA (2-methylcrotonoyl-CoA), but hydrates only a small amount of this substrate. Plays a key role in the beta-oxidation spiral of short- and medium-chain fatty acid oxidation. At a lower rate than the hydratase reaction, catalyzes the isomerase reaction of trans-3-enoyl-CoA species (such as (3E)-hexenoyl-CoA) to trans-2-enoyl-CoA species (such as (2E)-hexenoyl-CoA), which are subsequently hydrated to 3(S)-3-hydroxyacyl-CoA species (such as (3S)-hydroxyhexanoyl-CoA). The polypeptide is Enoyl-CoA hydratase, mitochondrial (ECHS1) (Pongo abelii (Sumatran orangutan)).